The sequence spans 962 residues: Replication protein 1a (962 aa).

In terms of domain architecture, Alphavirus-like MT spans 71 to 270; it reads LQLSKNLCPH…HSWKNIKSFL (200 aa). Positions 79–356 are methyltransferase; sequence PHSFAGAMRQ…EEICFRCPKD (278 aa). The interval 536-561 is disordered; sequence DVDERPAGTVSGPTIQAPSVTQENTV. The span at 546–561 shows a compositional bias: polar residues; it reads SGPTIQAPSVTQENTV. A (+)RNA virus helicase ATP-binding domain is found at 667–820; sequence NKDCVLNNNV…KLSPDSSDQQ (154 aa). The tract at residues 693 to 941 is ATP-dependent helicase; it reads LMDGVAGCGK…STKCDLFTDK (249 aa). A (+)RNA virus helicase C-terminal domain is found at 821-962; it reads IRTFRCPKDV…SRKFRLLFGC (142 aa).

Belongs to the bromoviridae replication protein 1a family. Interacts with RNA-directed RNA polymerase 2a.

It is found in the host endoplasmic reticulum membrane. Involved in the virus replication. Contains a helicase domain and a methyltransferase domain. The methyltransferase domain is probably involved in viral RNA capping. Involved in the formation of ER membrane spherular invaginations in which RNA replication complexes form. This is Replication protein 1a from Solanum lycopersicum (Tomato).